A 203-amino-acid polypeptide reads, in one-letter code: N-(5'-phosphoribosyl)anthranilate isomerase (203 aa).

The protein belongs to the TrpF family.

It catalyses the reaction N-(5-phospho-beta-D-ribosyl)anthranilate = 1-(2-carboxyphenylamino)-1-deoxy-D-ribulose 5-phosphate. The protein operates within amino-acid biosynthesis; L-tryptophan biosynthesis; L-tryptophan from chorismate: step 3/5. In Geotalea uraniireducens (strain Rf4) (Geobacter uraniireducens), this protein is N-(5'-phosphoribosyl)anthranilate isomerase.